The following is a 267-amino-acid chain: PHD finger protein ALFIN-LIKE 7 (267 aa).

The disordered stretch occupies residues 162-207; it reads TKVSNGSSKSNKSNPKPSKQSNSNSKPAKPPQPKDEEDSGPEGTED. Over residues 165–188 the composition is skewed to low complexity; it reads SNGSSKSNKSNPKPSKQSNSNSKP. Positions 196–207 are enriched in acidic residues; sequence DEEDSGPEGTED. The segment at 211–263 adopts a PHD-type zinc-finger fold; it reads AYMCGACGETYANGEFWICCDVCEKWFHGKCVRITPAKAEHIKQYKCPGCSSK.

It belongs to the Alfin family. In terms of assembly, interacts with H3K4me3 and to a lesser extent with H3K4me2.

Its subcellular location is the nucleus. In terms of biological role, histone-binding component that specifically recognizes H3 tails trimethylated on 'Lys-4' (H3K4me3), which mark transcription start sites of virtually all active genes. The chain is PHD finger protein ALFIN-LIKE 7 from Oryza sativa subsp. japonica (Rice).